A 352-amino-acid polypeptide reads, in one-letter code: N-acetyl-gamma-glutamyl-phosphate reductase (352 aa).

This sequence belongs to the NAGSA dehydrogenase family. Type 1 subfamily.

The protein resides in the cytoplasm. It catalyses the reaction N-acetyl-L-glutamate 5-semialdehyde + phosphate + NADP(+) = N-acetyl-L-glutamyl 5-phosphate + NADPH + H(+). The protein operates within amino-acid biosynthesis; L-arginine biosynthesis; N(2)-acetyl-L-ornithine from L-glutamate: step 3/4. In terms of biological role, catalyzes the NADPH-dependent reduction of N-acetyl-5-glutamyl phosphate to yield N-acetyl-L-glutamate 5-semialdehyde. This is N-acetyl-gamma-glutamyl-phosphate reductase from Nostoc ellipsosporum.